A 134-amino-acid chain; its full sequence is Small ribosomal subunit protein uS12 (134 aa).

D89 is modified (3-methylthioaspartic acid). The interval 103 to 134 (DTAGVKDRKQGRSKYGAKRPKPGEAAATGKKK) is disordered. Residues 113–122 (GRSKYGAKRP) show a composition bias toward basic residues.

This sequence belongs to the universal ribosomal protein uS12 family. In terms of assembly, part of the 30S ribosomal subunit. Contacts proteins S8 and S17. May interact with IF1 in the 30S initiation complex.

In terms of biological role, with S4 and S5 plays an important role in translational accuracy. Its function is as follows. Interacts with and stabilizes bases of the 16S rRNA that are involved in tRNA selection in the A site and with the mRNA backbone. Located at the interface of the 30S and 50S subunits, it traverses the body of the 30S subunit contacting proteins on the other side and probably holding the rRNA structure together. The combined cluster of proteins S8, S12 and S17 appears to hold together the shoulder and platform of the 30S subunit. This Thermosynechococcus vestitus (strain NIES-2133 / IAM M-273 / BP-1) protein is Small ribosomal subunit protein uS12.